Reading from the N-terminus, the 627-residue chain is UvrABC system protein C (627 aa).

Residues 26–105 (PSPGVYQFRN…IKELKPRYNV (80 aa)) enclose the GIY-YIG domain. Positions 219 to 254 (STMIRSLTSAMQLFARELKFERAAEIKMQLESLKRY) constitute a UVR domain.

The protein belongs to the UvrC family. In terms of assembly, interacts with UvrB in an incision complex.

The protein resides in the cytoplasm. The UvrABC repair system catalyzes the recognition and processing of DNA lesions. UvrC both incises the 5' and 3' sides of the lesion. The N-terminal half is responsible for the 3' incision and the C-terminal half is responsible for the 5' incision. The protein is UvrABC system protein C of Pelodictyon phaeoclathratiforme (strain DSM 5477 / BU-1).